A 402-amino-acid chain; its full sequence is mRNA-capping enzyme subunit alpha (402 aa).

Lysine 66 acts as the N6-GMP-lysine intermediate in catalysis.

It belongs to the eukaryotic GTase family. As to quaternary structure, heterodimer. The mRNA-capping enzyme is composed of two separate chains alpha and beta, respectively a mRNA guanylyltransferase and an mRNA 5'-triphosphate monophosphatase.

The protein localises to the nucleus. The enzyme catalyses a 5'-end diphospho-ribonucleoside in mRNA + GTP + H(+) = a 5'-end (5'-triphosphoguanosine)-ribonucleoside in mRNA + diphosphate. Its function is as follows. Second step of mRNA capping. Transfer of the GMP moiety of GTP to the 5'-end of RNA via an enzyme-GMP covalent reaction intermediate. The sequence is that of mRNA-capping enzyme subunit alpha (rnp-2) from Neurospora crassa (strain ATCC 24698 / 74-OR23-1A / CBS 708.71 / DSM 1257 / FGSC 987).